Here is a 102-residue protein sequence, read N- to C-terminus: Protamine-2 (102 aa).

Positions 1 to 102 are disordered; sequence MVRYRVRSPS…RTRRRTCRKH (102 aa). Residues Ser8, Ser10, and Ser37 each carry the phosphoserine modification. Over residues 39–48 the composition is skewed to basic and acidic residues; the sequence is EHVEVYERTH. Over residues 49 to 102 the composition is skewed to basic residues; that stretch reads GHSHYRRRHCSRRRLRRIHRQQHRSCRRRKRRSCRHRRRHRRGCRTRRRTCRKH.

This sequence belongs to the protamine P2 family. Interacts with TDRP. In terms of processing, proteolytic processing into mature chains is required for histone eviction during spermatogenesis. Transition proteins (TNP1 and TNP2) are required for processing. In terms of tissue distribution, testis.

The protein resides in the nucleus. It localises to the chromosome. Functionally, protamines substitute for histones in the chromatin of sperm during the haploid phase of spermatogenesis. They compact sperm DNA into a highly condensed, stable and inactive complex. This is Protamine-2 (PRM2) from Pan paniscus (Pygmy chimpanzee).